Reading from the N-terminus, the 180-residue chain is Large ribosomal subunit protein uL22 (180 aa).

2 disordered regions span residues 1-20 (MTKP…CKSR) and 160-180 (PKPA…EISA). Positions 8–20 (KTPSNPEKSCKSR) are enriched in polar residues.

This sequence belongs to the universal ribosomal protein uL22 family.

The sequence is that of Large ribosomal subunit protein uL22 (rpl17) from Dictyostelium discoideum (Social amoeba).